The primary structure comprises 204 residues: Ras-related protein RabL (204 aa).

14–21 (GDSNVGKT) serves as a coordination point for GTP. An Effector region motif is present at residues 36-44 (RPPSIGPDY). GTP is bound by residues 62–66 (DTCGQ) and 120–123 (TKSD). Residues Cys-203 and Cys-204 are each lipidated (S-geranylgeranyl cysteine).

Belongs to the small GTPase superfamily. Rab family.

It localises to the cell membrane. The sequence is that of Ras-related protein RabL (rabL) from Dictyostelium discoideum (Social amoeba).